A 71-amino-acid polypeptide reads, in one-letter code: Small ribosomal subunit protein bS21 (71 aa).

The segment at 43 to 71 (TERKRAKASAVKRHAKKLARENARRTRLY) is disordered. Residues 46–59 (KRAKASAVKRHAKK) show a composition bias toward basic residues. A compositionally biased stretch (basic and acidic residues) spans 60–71 (LARENARRTRLY).

It belongs to the bacterial ribosomal protein bS21 family.

This chain is Small ribosomal subunit protein bS21, found in Pectobacterium atrosepticum (strain SCRI 1043 / ATCC BAA-672) (Erwinia carotovora subsp. atroseptica).